A 590-amino-acid chain; its full sequence is ATP-dependent zinc metalloprotease FtsH 1 (590 aa).

Topologically, residues Met1–Gln8 are cytoplasmic. The helical transmembrane segment at Leu9–Thr29 threads the bilayer. The Extracellular segment spans residues Gln30–Ser103. Residues Val104–Leu124 traverse the membrane as a helical segment. The Cytoplasmic portion of the chain corresponds to Ser125–Met590. Gly195 to Thr202 provides a ligand contact to ATP. His418 serves as a coordination point for Zn(2+). Glu419 is a catalytic residue. Zn(2+)-binding residues include His422 and Asp496.

It in the central section; belongs to the AAA ATPase family. In the C-terminal section; belongs to the peptidase M41 family. In terms of assembly, homohexamer. It depends on Zn(2+) as a cofactor.

The protein resides in the cell membrane. In terms of biological role, acts as a processive, ATP-dependent zinc metallopeptidase for both cytoplasmic and membrane proteins. Plays a role in the quality control of integral membrane proteins. This is ATP-dependent zinc metalloprotease FtsH 1 from Alkaliphilus metalliredigens (strain QYMF).